The chain runs to 103 residues: Large ribosomal subunit protein bL21 (103 aa).

This sequence belongs to the bacterial ribosomal protein bL21 family. Part of the 50S ribosomal subunit. Contacts protein L20.

In terms of biological role, this protein binds to 23S rRNA in the presence of protein L20. The protein is Large ribosomal subunit protein bL21 of Shewanella sp. (strain ANA-3).